We begin with the raw amino-acid sequence, 195 residues long: Protease (195 aa).

One can recognise a Peptidase A2 domain in the interval 71–149 (ALMLVDTGAE…DKWQILGRDV (79 aa)). The active site involves aspartate 76.

This is Protease from Bos taurus (Bovine).